We begin with the raw amino-acid sequence, 315 residues long: MEVTNQSNGCSNNEKESPYISSVLPGWFSEISPLWPGEAHSLKVEKILFQGKSDYQNVMVFQSSTYGKVLVLDGVIQLTERDECAYQEMITHLPLCSIPNPKKVLVIGGGDGGVLREVSRHSSVEQIDICEIDKMVVEVAKEFFPDVAVGYEDPRVNLHIGDGVAFLKNVPAGTYDAVIVDSSDPIGPAQELFEKPFFESIARALRPGGVVSTQAESIWLHMHIIEEIVANCRQIFKGSVNYAWTTVPTYPSGMIGFMLCSTEGPAVDFKNPINPIDDESGPKTIAPLKFYNSEIHQASFCLPSFAKRVIESKGK.

A PABS domain is found at 25 to 262; the sequence is PGWFSEISPL…GMIGFMLCST (238 aa). Q56 provides a ligand contact to S-adenosyl 3-(methylsulfanyl)propylamine. A putrescine-binding site is contributed by Y86. Residues Q87, D111, E131, 162 to 163, and D181 contribute to the S-adenosyl 3-(methylsulfanyl)propylamine site; that span reads DG. Residue D181 is the Proton acceptor of the active site. Putrescine-binding positions include 181-184 and Y250; that span reads DSSD.

The protein belongs to the spermidine/spermine synthase family.

The catalysed reaction is S-adenosyl 3-(methylsulfanyl)propylamine + putrescine = S-methyl-5'-thioadenosine + spermidine + H(+). The protein operates within amine and polyamine biosynthesis; spermidine biosynthesis; spermidine from putrescine: step 1/1. In Hyoscyamus niger (Black henbane), this protein is Spermidine synthase 1.